We begin with the raw amino-acid sequence, 117 residues long: G antigen 12H (117 aa).

Positions 1–117 (MSWRGRSTYY…PEEGEKQSQC (117 aa)) are disordered. 2 stretches are compositionally biased toward acidic residues: residues 32-45 (FSDEVEPATPEEGE) and 87-96 (ECEDGPDGQE). A compositionally biased stretch (basic and acidic residues) spans 103 to 117 (EEVKTPEEGEKQSQC).

This sequence belongs to the GAGE family.

The polypeptide is G antigen 12H (GAGE12H) (Homo sapiens (Human)).